Here is a 103-residue protein sequence, read N- to C-terminus: Co-chaperonin GroES (103 aa).

It belongs to the GroES chaperonin family. In terms of assembly, heptamer of 7 subunits arranged in a ring. Interacts with the chaperonin GroEL.

The protein localises to the cytoplasm. Its function is as follows. Together with the chaperonin GroEL, plays an essential role in assisting protein folding. The GroEL-GroES system forms a nano-cage that allows encapsulation of the non-native substrate proteins and provides a physical environment optimized to promote and accelerate protein folding. GroES binds to the apical surface of the GroEL ring, thereby capping the opening of the GroEL channel. This chain is Co-chaperonin GroES, found in Thermosynechococcus vestitus (strain NIES-2133 / IAM M-273 / BP-1).